The sequence spans 51 residues: uncharacterized protein (51 aa).

This sequence to E.coli YdaF.

This is an uncharacterized protein from Escherichia coli O157:H7.